The chain runs to 69 residues: Protein transport protein Sec61 subunit gamma-3 (69 aa).

An N-acetylmethionine modification is found at Met1. The Cytoplasmic portion of the chain corresponds to 1–32 (MEAIDSAIDPLRDFAKSSVRLVQRCHKPDRKE). The helical transmembrane segment at 33-61 (FTKVAVRTAIGFVVMGFVGFFVKLVFIPI) threads the bilayer. Residues 62-69 (NNIIVGSS) are Extracellular-facing.

Belongs to the SecE/SEC61-gamma family. In terms of assembly, heterotrimeric complex composed of SEC61-alpha, SEC61-beta and SEC61-gamma.

The protein resides in the endoplasmic reticulum membrane. Functionally, necessary for protein translocation in the endoplasmic reticulum. The polypeptide is Protein transport protein Sec61 subunit gamma-3 (SEC61G3) (Arabidopsis thaliana (Mouse-ear cress)).